A 192-amino-acid chain; its full sequence is Transmembrane protein 276 (192 aa).

An N-terminal signal peptide occupies residues 1–32 (MVSKPRTEWSTVLSHLVLAGVSLHAAVSSVQS). 4 helical membrane-spanning segments follow: residues 35-55 (GAAA…APGP), 63-83 (AGAW…FHWV), 92-112 (LLLG…PEGC), and 114-134 (VAGQ…AVFT).

It is found in the membrane. In Mus musculus (Mouse), this protein is Transmembrane protein 276.